Reading from the N-terminus, the 150-residue chain is MLKNKTKKTEVYALCRHISLSADKARRVIDQIRGRSYEETLMILELMPYRACYPILKLVYSAASNAAYSMDSAEVNLVISKAEVNEGTITKKFKPRARGRSYVIKRTTCHITIVVKDISLDKYEEIYSFKNPIWKNTIDVYSNGVVWHKK.

The protein belongs to the universal ribosomal protein uL22 family. Part of the 50S ribosomal subunit.

Its subcellular location is the plastid. Functionally, this protein binds specifically to 23S rRNA. Its function is as follows. The globular domain of the protein is located near the polypeptide exit tunnel on the outside of the subunit, while an extended beta-hairpin is found that lines the wall of the exit tunnel in the center of the 70S ribosome. The polypeptide is Large ribosomal subunit protein uL22c (rpl22) (Orobanche minor (Small broomrape)).